A 616-amino-acid polypeptide reads, in one-letter code: Bifunctional 2-aminoethylphosphonate cytidylyltransferase/aminotransferase (616 aa).

Residues 1 to 240 (MIKQAVILAG…VKNIYPHIVE (240 aa)) form a 2-aminoethylphosphonate cytidylyltransferase region. Positions 8, 10, 11, 25, 83, 88, 104, and 105 each coordinate CMP-(2-aminoethyl)phosphonate. Positions 106 and 136 each coordinate Mg(2+). Residues D136, K153, and E196 each coordinate CMP-(2-aminoethyl)phosphonate. Mg(2+)-binding residues include E220 and D222. The 2-aminoethylphosphonate aminotransferase stretch occupies residues 250 to 616 (EVLLNPGPAT…EYMNGIGVGV (367 aa)). Positions 313, 314, 315, 390, 441, and 490 each coordinate pyridoxal 5'-phosphate.

It in the N-terminal section; belongs to the LicC/PntC cytidylyltransferase family. The protein in the C-terminal section; belongs to the class-V pyridoxal-phosphate-dependent aminotransferase family. PhnW subfamily. As to quaternary structure, homodimer. Mg(2+) is required as a cofactor. It depends on Zn(2+) as a cofactor. Requires pyridoxal 5'-phosphate as cofactor.

The catalysed reaction is (2-aminoethyl)phosphonate + CTP = CMP-(2-aminoethyl)phosphonate + diphosphate. The enzyme catalyses (2-aminoethyl)phosphonate + pyruvate = phosphonoacetaldehyde + L-alanine. The protein operates within phosphorus metabolism; phosphonate biosynthesis. Cytidylyltransferase activity is inhibited in the presence of EDTA and is restored by the addition of Mg(2+) or Zn(2+). Bifunctional transferase involved in the biosynthesis of cell-surface phosphonates. The aminotransferase region catalyzes the transformation of phosphonoacetaldehyde (PnAA) to 2-aminoethylphosphonate (AEP). The cytidylyltransferase region catalyzes the activation of 2-aminoethylphosphonate (AEP) to CMP-2-aminoethylphosphonate (CMP-AEP). Cannot use phosphocholine. Exhibits strong activity towards CTP, limited activity towards ATP and no activity with GTP. This chain is Bifunctional 2-aminoethylphosphonate cytidylyltransferase/aminotransferase, found in Treponema denticola (strain ATCC 35405 / DSM 14222 / CIP 103919 / JCM 8153 / KCTC 15104).